Here is a 224-residue protein sequence, read N- to C-terminus: Phosphoribosylformylglycinamidine synthase subunit PurQ (224 aa).

A Glutamine amidotransferase type-1 domain is found at phenylalanine 3–alanine 224. Cysteine 86 acts as the Nucleophile in catalysis. Active-site residues include histidine 195 and glutamate 197.

Part of the FGAM synthase complex composed of 1 PurL, 1 PurQ and 2 PurS subunits.

The protein localises to the cytoplasm. It catalyses the reaction N(2)-formyl-N(1)-(5-phospho-beta-D-ribosyl)glycinamide + L-glutamine + ATP + H2O = 2-formamido-N(1)-(5-O-phospho-beta-D-ribosyl)acetamidine + L-glutamate + ADP + phosphate + H(+). The catalysed reaction is L-glutamine + H2O = L-glutamate + NH4(+). It participates in purine metabolism; IMP biosynthesis via de novo pathway; 5-amino-1-(5-phospho-D-ribosyl)imidazole from N(2)-formyl-N(1)-(5-phospho-D-ribosyl)glycinamide: step 1/2. Part of the phosphoribosylformylglycinamidine synthase complex involved in the purines biosynthetic pathway. Catalyzes the ATP-dependent conversion of formylglycinamide ribonucleotide (FGAR) and glutamine to yield formylglycinamidine ribonucleotide (FGAM) and glutamate. The FGAM synthase complex is composed of three subunits. PurQ produces an ammonia molecule by converting glutamine to glutamate. PurL transfers the ammonia molecule to FGAR to form FGAM in an ATP-dependent manner. PurS interacts with PurQ and PurL and is thought to assist in the transfer of the ammonia molecule from PurQ to PurL. The chain is Phosphoribosylformylglycinamidine synthase subunit PurQ from Trichormus variabilis (strain ATCC 29413 / PCC 7937) (Anabaena variabilis).